The sequence spans 300 residues: Acetyl-coenzyme A carboxylase carboxyl transferase subunit beta 2 (300 aa).

The 269-residue stretch at 26–294 (VWVKCPSCRE…SGAYSSEAVA (269 aa)) folds into the CoA carboxyltransferase N-terminal domain. Positions 30, 33, 49, and 51 each coordinate Zn(2+). The segment at 30–51 (CPSCRELIYHKQLAERMKVCRC) adopts a C4-type zinc-finger fold.

It belongs to the AccD/PCCB family. In terms of assembly, acetyl-CoA carboxylase is a heterohexamer composed of biotin carboxyl carrier protein (AccB), biotin carboxylase (AccC) and two subunits each of ACCase subunit alpha (AccA) and ACCase subunit beta (AccD). Zn(2+) serves as cofactor.

The protein localises to the cytoplasm. The enzyme catalyses N(6)-carboxybiotinyl-L-lysyl-[protein] + acetyl-CoA = N(6)-biotinyl-L-lysyl-[protein] + malonyl-CoA. It functions in the pathway lipid metabolism; malonyl-CoA biosynthesis; malonyl-CoA from acetyl-CoA: step 1/1. Component of the acetyl coenzyme A carboxylase (ACC) complex. Biotin carboxylase (BC) catalyzes the carboxylation of biotin on its carrier protein (BCCP) and then the CO(2) group is transferred by the transcarboxylase to acetyl-CoA to form malonyl-CoA. This is Acetyl-coenzyme A carboxylase carboxyl transferase subunit beta 2 from Roseiflexus castenholzii (strain DSM 13941 / HLO8).